Consider the following 302-residue polypeptide: Deoxyhypusine hydroxylase-B (302 aa).

HEAT-like PBS-type repeat units lie at residues 49 to 75 (LAHEAAFALGQMQDAEAIPALEAVLKD), 82 to 108 (VRHEAAEALGAIGLEKSISLLEESLAV), 171 to 200 (MYERYAALFALRNDSGDAAVSAIVAALGVK), 204 to 230 (LRHEVAYVLGQLQNKAASDALSTVLKN), and 237 to 263 (VRHEAAEALGSIADQESIALLEEFAKD). Residues H51, E52, H84, and E85 each coordinate Fe cation. Fe cation-binding residues include H206, E207, H239, and E240.

It belongs to the deoxyhypusine hydroxylase family. Fe(2+) is required as a cofactor.

It carries out the reaction [eIF5A protein]-deoxyhypusine + AH2 + O2 = [eIF5A protein]-hypusine + A + H2O. The protein operates within protein modification; eIF5A hypusination. Its function is as follows. Catalyzes the hydroxylation of the N(6)-(4-aminobutyl)-L-lysine intermediate to form hypusine, an essential post-translational modification only found in mature eIF-5A factor. This chain is Deoxyhypusine hydroxylase-B, found in Oryza sativa subsp. japonica (Rice).